The chain runs to 492 residues: Cytochrome P450 2A1 (492 aa).

Ser130 carries the phosphoserine modification. Cys437 is a binding site for heme.

The protein belongs to the cytochrome P450 family. The cofactor is heme. In terms of tissue distribution, liver and testis.

The protein localises to the endoplasmic reticulum membrane. It is found in the microsome membrane. The catalysed reaction is an organic molecule + reduced [NADPH--hemoprotein reductase] + O2 = an alcohol + oxidized [NADPH--hemoprotein reductase] + H2O + H(+). Highly active in the 7-alpha-hydroxylation of testosterone, progesterone and androstenedione. The chain is Cytochrome P450 2A1 (Cyp2a1) from Rattus norvegicus (Rat).